Here is a 603-residue protein sequence, read N- to C-terminus: Protein SHORT-ROOT 2 (603 aa).

2 disordered regions span residues histidine 11–serine 58 and aspartate 106–glycine 140. Residues serine 31 to serine 44 are compositionally biased toward low complexity. The segment covering histidine 45–serine 58 has biased composition (basic residues). The segment covering serine 108–serine 125 has biased composition (low complexity). In terms of domain architecture, GRAS spans alanine 179–lysine 602. The interval arginine 186 to arginine 249 is leucine repeat I (LRI). Residues alanine 268–valine 354 form a VHIID region. Positions leucine 318 to aspartate 322 match the VHIID motif. Residues glutamate 370–aspartate 406 form a leucine repeat II (LRII) region. Residues leucine 416–aspartate 514 are PFYRE. Positions serine 517–lysine 602 are SAW.

Belongs to the GRAS family. As to quaternary structure, does not interact with SCR1.

It is found in the nucleus. Putative transcription factor involved in asymmetric cell division. The protein is Protein SHORT-ROOT 2 (SHR2) of Oryza sativa subsp. indica (Rice).